The following is an 82-amino-acid chain: ATP synthase subunit c (82 aa).

2 helical membrane-spanning segments follow: residues 6–26 (LGLTCLAAAIGMAIAAAGCGI) and 49–69 (IMVTLILGLAFVESLAIYALV).

Belongs to the ATPase C chain family. F-type ATPases have 2 components, F(1) - the catalytic core - and F(0) - the membrane proton channel. F(1) has five subunits: alpha(3), beta(3), gamma(1), delta(1), epsilon(1). F(0) has three main subunits: a(1), b(2) and c(10-14). The alpha and beta chains form an alternating ring which encloses part of the gamma chain. F(1) is attached to F(0) by a central stalk formed by the gamma and epsilon chains, while a peripheral stalk is formed by the delta and b chains.

Its subcellular location is the cell inner membrane. Functionally, f(1)F(0) ATP synthase produces ATP from ADP in the presence of a proton or sodium gradient. F-type ATPases consist of two structural domains, F(1) containing the extramembraneous catalytic core and F(0) containing the membrane proton channel, linked together by a central stalk and a peripheral stalk. During catalysis, ATP synthesis in the catalytic domain of F(1) is coupled via a rotary mechanism of the central stalk subunits to proton translocation. In terms of biological role, key component of the F(0) channel; it plays a direct role in translocation across the membrane. A homomeric c-ring of between 10-14 subunits forms the central stalk rotor element with the F(1) delta and epsilon subunits. This chain is ATP synthase subunit c, found in Nitratidesulfovibrio vulgaris (strain ATCC 29579 / DSM 644 / CCUG 34227 / NCIMB 8303 / VKM B-1760 / Hildenborough) (Desulfovibrio vulgaris).